Here is a 423-residue protein sequence, read N- to C-terminus: MQTQILERMESEVRTYSRSFPTVFTEAKGARLHAEDGNQYIDFLAGAGTLNYGHNHPKLKQALADYIASDGIVHGLDMWSAAKRDYLETLEEVILKPRGLDYKVHLPGPTGTNAVEAAIRLARNAKGRHNIVTFTNGFHGVTMGALATTGNRKFREATGGIPTQGASFMPFDGYMGEGVDTLSYFEKLLGDNSGGLDVPAAVIIETVQGEGGINPAGIPWLQRLEKICRDHDMLLIVDDIQAGCGRTGKFFSFEHAGITPDIVTNSKSLSGFGLPFAHVLMRPELDIWKPGQYNGTFRGFNLAFVTAAAAMRHFWSDDTFERDVQRKGRVVEDRFQKLASFMTEKGHPASERGRGLMRGLDVGDGDMADKITAQAFKNGLIIETSGHSGQVIKCLCPLTITDEDLVGGLDILEQSVKEVFGQA.

An N6-(pyridoxal phosphate)lysine modification is found at Lys-267.

This sequence belongs to the class-III pyridoxal-phosphate-dependent aminotransferase family. Homohexamer. Requires pyridoxal 5'-phosphate as cofactor.

It catalyses the reaction L-2,4-diaminobutanoate + 2-oxoglutarate = L-aspartate 4-semialdehyde + L-glutamate. Its pathway is amine and polyamine biosynthesis; ectoine biosynthesis; L-ectoine from L-aspartate 4-semialdehyde: step 1/3. Catalyzes reversively the conversion of L-aspartate beta-semialdehyde (ASA) to L-2,4-diaminobutyrate (DABA) by transamination with L-glutamate. The polypeptide is Diaminobutyrate--2-oxoglutarate transaminase (ectB) (Chromohalobacter salexigens (strain ATCC BAA-138 / DSM 3043 / CIP 106854 / NCIMB 13768 / 1H11)).